The following is a 705-amino-acid chain: Elongation factor G (705 aa).

Residues 8–290 (ERYRNFGIMA…GVVHLLPSPA (283 aa)) enclose the tr-type G domain. GTP-binding positions include 17 to 24 (AHIDAGKT), 88 to 92 (DTPGH), and 142 to 145 (NKMD). The segment at 290–309 (ADRPPVQGIDENEKEDTRDA) is disordered.

Belongs to the TRAFAC class translation factor GTPase superfamily. Classic translation factor GTPase family. EF-G/EF-2 subfamily.

It is found in the cytoplasm. Its function is as follows. Catalyzes the GTP-dependent ribosomal translocation step during translation elongation. During this step, the ribosome changes from the pre-translocational (PRE) to the post-translocational (POST) state as the newly formed A-site-bound peptidyl-tRNA and P-site-bound deacylated tRNA move to the P and E sites, respectively. Catalyzes the coordinated movement of the two tRNA molecules, the mRNA and conformational changes in the ribosome. The sequence is that of Elongation factor G from Xanthomonas campestris pv. campestris (strain 8004).